The chain runs to 552 residues: Berberine bridge enzyme-like 6 (552 aa).

A signal peptide spans 1–16 (MKEAFVFLLCLTNKFP). Cysteine 56 and cysteine 119 are oxidised to a cystine. Residues asparagine 76, asparagine 161, asparagine 280, asparagine 364, asparagine 419, and asparagine 463 are each glycosylated (N-linked (GlcNAc...) asparagine). The FAD-binding PCMH-type domain occupies 93-270 (FSSPNFKKLL…LSWKINLVEV (178 aa)). The 6-(S-cysteinyl)-8alpha-(pros-histidyl)-FAD (His-Cys) cross-link spans 134 to 196 (HDNEGFSYMS…QTLAFPAGVC (63 aa)).

It belongs to the oxygen-dependent FAD-linked oxidoreductase family. FAD is required as a cofactor. The FAD cofactor is bound via a bicovalent 6-S-cysteinyl, 8alpha-N1-histidyl FAD linkage.

Its subcellular location is the secreted. The protein localises to the cell wall. Probable flavin-dependent oxidoreductase. The protein is Berberine bridge enzyme-like 6 of Arabidopsis thaliana (Mouse-ear cress).